The following is an 816-amino-acid chain: Nicotine 6-hydroxylase large subunit (816 aa).

Glutamate 745 serves as a coordination point for Mo-molybdopterin cytosine dinucleotide.

Belongs to the xanthine dehydrogenase family. As to quaternary structure, heterotrimer composed of a large subunit (NdhL), a medium subunit (NdhM) and a small subunit (NdhS). The cofactor is Mo-molybdopterin cytosine dinucleotide.

It is found in the cytoplasm. The catalysed reaction is (R)-nicotine + A + H2O = (R)-6-hydroxynicotine + AH2. It catalyses the reaction (S)-nicotine + A + H2O = (S)-6-hydroxynicotine + AH2. It participates in alkaloid degradation; nicotine degradation; 6-hydroxypseudooxynicotine from nicotine (R-isomer route): step 1/2. Its pathway is alkaloid degradation; nicotine degradation; 6-hydroxypseudooxynicotine from nicotine (S-isomer route): step 1/2. Nicotine dehydrogenase activity is inhibited by tungsten. Its function is as follows. Component of the nicotine 6-hydroxylase, which is involved in the degradation of nicotine. Catalyzes the hydroxylation of the pyridine ring at C6 to form 6-hydroxynicotine. Can use both L-nicotine and D-nicotine. In Paenarthrobacter nicotinovorans (Arthrobacter nicotinovorans), this protein is Nicotine 6-hydroxylase large subunit.